The chain runs to 176 residues: Inner membrane-spanning protein YciB (176 aa).

Helical transmembrane passes span 24-44 (TATA…AFRH), 49-69 (PMLW…LVLH), 76-96 (WKPT…QLAF), 119-139 (LSVV…FVAY), and 149-169 (FKLF…SLWL).

This sequence belongs to the YciB family.

The protein resides in the cell inner membrane. In terms of biological role, plays a role in cell envelope biogenesis, maintenance of cell envelope integrity and membrane homeostasis. The protein is Inner membrane-spanning protein YciB of Paraburkholderia phytofirmans (strain DSM 17436 / LMG 22146 / PsJN) (Burkholderia phytofirmans).